A 394-amino-acid polypeptide reads, in one-letter code: DNA replication and repair protein RecF (394 aa).

ATP is bound at residue 30 to 37 (GSNGQGKT).

The protein belongs to the RecF family.

Its subcellular location is the cytoplasm. The RecF protein is involved in DNA metabolism; it is required for DNA replication and normal SOS inducibility. RecF binds preferentially to single-stranded, linear DNA. It also seems to bind ATP. This chain is DNA replication and repair protein RecF, found in Cutibacterium acnes (strain DSM 16379 / KPA171202) (Propionibacterium acnes).